The following is a 547-amino-acid chain: Chaperonin GroEL (547 aa).

Residues 30-33, Lys51, 87-91, Gly415, and Asp496 each bind ATP; these read TLGP and DGTTT. The tract at residues 527–547 is disordered; sequence KKDSPAMPGGGGMGGMGGMDF. Residues 534–547 are compositionally biased toward gly residues; it reads PGGGGMGGMGGMDF.

Belongs to the chaperonin (HSP60) family. In terms of assembly, forms a cylinder of 14 subunits composed of two heptameric rings stacked back-to-back. Interacts with the co-chaperonin GroES.

Its subcellular location is the cytoplasm. The enzyme catalyses ATP + H2O + a folded polypeptide = ADP + phosphate + an unfolded polypeptide.. Its function is as follows. Together with its co-chaperonin GroES, plays an essential role in assisting protein folding. The GroEL-GroES system forms a nano-cage that allows encapsulation of the non-native substrate proteins and provides a physical environment optimized to promote and accelerate protein folding. This chain is Chaperonin GroEL, found in Methylocella silvestris (strain DSM 15510 / CIP 108128 / LMG 27833 / NCIMB 13906 / BL2).